Here is a 456-residue protein sequence, read N- to C-terminus: Acetylcholine receptor subunit alpha (456 aa).

A signal peptide spans 1 to 20; that stretch reads MNYFILILPILPYLYGPAVC. Topologically, residues 21–230 are extracellular; sequence SEDETRLVKT…ITYHFLLLRL (210 aa). Cystine bridges form between C148/C162 and C212/C213. N161 carries an N-linked (GlcNAc...) asparagine glycan. 3 consecutive transmembrane segments (helical) span residues 231–255, 263–281, and 297–316; these read PLYF…VFYL, MTLS…LVIV, and YMLF…VIVI. Over 317–428 the chain is Cytoplasmic; sequence NTHHRSPSTH…WKFVAMVLDH (112 aa). Residues 429-447 traverse the membrane as a helical segment; it reads ILLCVFMAVCIIGTLGVFA.

Belongs to the ligand-gated ion channel (TC 1.A.9) family. Acetylcholine receptor (TC 1.A.9.1) subfamily. Alpha-1/CHRNA1 sub-subfamily. One of the alpha chains that assemble within the acetylcholine receptor, a pentamer of two alpha chains, a beta, a delta, and a gamma or epsilon chains.

It is found in the postsynaptic cell membrane. It localises to the cell membrane. The enzyme catalyses K(+)(in) = K(+)(out). It carries out the reaction Na(+)(in) = Na(+)(out). Functionally, upon acetylcholine binding, the AChR responds by an extensive change in conformation that affects all subunits and leads to opening of an ion-conducting channel across the plasma membrane. The sequence is that of Acetylcholine receptor subunit alpha (chrna1) from Danio rerio (Zebrafish).